Here is a 244-residue protein sequence, read N- to C-terminus: Small ribosomal subunit protein uS3 (244 aa).

The KH type-2 domain occupies 39-107 (VREMLRKKLA…PAHINVTEVR (69 aa)). The tract at residues 213 to 244 (VGQEKQDDSPRNDRNDRGDRGDRPSRPAREAR) is disordered. Positions 216–244 (EKQDDSPRNDRNDRGDRGDRPSRPAREAR) are enriched in basic and acidic residues.

It belongs to the universal ribosomal protein uS3 family. Part of the 30S ribosomal subunit. Forms a tight complex with proteins S10 and S14.

Its function is as follows. Binds the lower part of the 30S subunit head. Binds mRNA in the 70S ribosome, positioning it for translation. This is Small ribosomal subunit protein uS3 from Xanthomonas axonopodis pv. citri (strain 306).